The primary structure comprises 118 residues: Large ribosomal subunit protein bL20 (118 aa).

Belongs to the bacterial ribosomal protein bL20 family.

In terms of biological role, binds directly to 23S ribosomal RNA and is necessary for the in vitro assembly process of the 50S ribosomal subunit. It is not involved in the protein synthesizing functions of that subunit. This is Large ribosomal subunit protein bL20 from Hydrogenovibrio crunogenus (strain DSM 25203 / XCL-2) (Thiomicrospira crunogena).